The primary structure comprises 739 residues: Phosphoribosylformylglycinamidine synthase subunit PurL (739 aa).

H52 is a catalytic residue. Y55 and K94 together coordinate ATP. E96 contacts Mg(2+). Residues S97 to H100 and R119 each bind substrate. Residue H98 is the Proton acceptor of the active site. D120 provides a ligand contact to Mg(2+). Substrate is bound at residue Q243. Residue D271 coordinates Mg(2+). E315–Q317 is a binding site for substrate. ATP is bound by residues D498 and G535. N536 contacts Mg(2+). Residue S538 coordinates substrate.

Belongs to the FGAMS family. In terms of assembly, monomer. Part of the FGAM synthase complex composed of 1 PurL, 1 PurQ and 2 PurS subunits.

The protein resides in the cytoplasm. It catalyses the reaction N(2)-formyl-N(1)-(5-phospho-beta-D-ribosyl)glycinamide + L-glutamine + ATP + H2O = 2-formamido-N(1)-(5-O-phospho-beta-D-ribosyl)acetamidine + L-glutamate + ADP + phosphate + H(+). It participates in purine metabolism; IMP biosynthesis via de novo pathway; 5-amino-1-(5-phospho-D-ribosyl)imidazole from N(2)-formyl-N(1)-(5-phospho-D-ribosyl)glycinamide: step 1/2. Its function is as follows. Part of the phosphoribosylformylglycinamidine synthase complex involved in the purines biosynthetic pathway. Catalyzes the ATP-dependent conversion of formylglycinamide ribonucleotide (FGAR) and glutamine to yield formylglycinamidine ribonucleotide (FGAM) and glutamate. The FGAM synthase complex is composed of three subunits. PurQ produces an ammonia molecule by converting glutamine to glutamate. PurL transfers the ammonia molecule to FGAR to form FGAM in an ATP-dependent manner. PurS interacts with PurQ and PurL and is thought to assist in the transfer of the ammonia molecule from PurQ to PurL. The chain is Phosphoribosylformylglycinamidine synthase subunit PurL from Caulobacter vibrioides (strain ATCC 19089 / CIP 103742 / CB 15) (Caulobacter crescentus).